Reading from the N-terminus, the 1029-residue chain is Eukaryotic translation initiation factor 3 subunit A (1029 aa).

Residues 92 to 121 (LKKFIELAEQKVTEAQAKADEIQSSLESAA) are a coiled coil. Positions 339–523 (MTKAASFVLL…GVLTFESDIF (185 aa)) constitute a PCI domain. Positions 606-903 (TRRAIIEKRK…EEEAEQRRAA (298 aa)) form a coiled coil. 4 stretches are compositionally biased toward basic and acidic residues: residues 621-632 (ALQKKQREEENR), 644-666 (EQQRLLDEHRERERKRMKDEQDR), 797-901 (TEKR…EQRR), and 913-924 (GPAREASPERTA). 2 disordered regions span residues 621–666 (ALQK…EQDR) and 797–1029 (TEKR…KQQQ). The segment covering 943–960 (AKAAASAGEQPAAAQEAT) has biased composition (low complexity). Basic and acidic residues predominate over residues 977–993 (ATRDGPSDSRDLSHARE).

Belongs to the eIF-3 subunit A family. Component of the eukaryotic translation initiation factor 3 (eIF-3) complex.

It localises to the cytoplasm. Its function is as follows. RNA-binding component of the eukaryotic translation initiation factor 3 (eIF-3) complex, which is involved in protein synthesis of a specialized repertoire of mRNAs and, together with other initiation factors, stimulates binding of mRNA and methionyl-tRNAi to the 40S ribosome. The eIF-3 complex specifically targets and initiates translation of a subset of mRNAs involved in cell proliferation. This Coccidioides immitis (strain RS) (Valley fever fungus) protein is Eukaryotic translation initiation factor 3 subunit A.